The following is a 158-amino-acid chain: Pyruvoyl-dependent arginine decarboxylase (158 aa).

S44 is modified (pyruvic acid (Ser)).

The protein belongs to the PdaD family. The cofactor is pyruvate.

The enzyme catalyses L-arginine + H(+) = agmatine + CO2. This chain is Pyruvoyl-dependent arginine decarboxylase, found in Pyrococcus horikoshii (strain ATCC 700860 / DSM 12428 / JCM 9974 / NBRC 100139 / OT-3).